A 227-amino-acid polypeptide reads, in one-letter code: N-acetyltransferase 8 (227 aa).

At 1–42 (MAPCHIRKYQESDRQWVVGLLSRGMAEHAPATFRQLLKLPRT) the chain is on the cytoplasmic side. The helical; Signal-anchor for type II membrane protein transmembrane segment at 43-63 (LILLLGGPLALLLVSGSWLLA) threads the bilayer. The N-acetyltransferase domain occupies 61 to 220 (LLALVFSISL…HTVHFIYHLP (160 aa)). At 64–227 (LVFSISLFPA…HLPSSKVGSL (164 aa)) the chain is on the lumenal side.

It belongs to the NAT8 family. Preferentially expressed in liver and kidney. Also detected in brain (at protein level).

The protein localises to the endoplasmic reticulum-Golgi intermediate compartment membrane. The protein resides in the endoplasmic reticulum membrane. It carries out the reaction L-lysyl-[protein] + acetyl-CoA = N(6)-acetyl-L-lysyl-[protein] + CoA + H(+). The enzyme catalyses an S-substituted L-cysteine + acetyl-CoA = an N-acetyl-L-cysteine-S-conjugate + CoA + H(+). The protein operates within sulfur metabolism; glutathione metabolism. In terms of biological role, endoplasmic reticulum (ER)-membrane-bound lysine N-acetyltransferase catalyzing the N6-acetylation of lysine residues in the lumen of the ER in various proteins, including PROM1 and BACE1, using acetyl-CoA as acetyl donor. Thereby, may regulate apoptosis through the acetylation and the regulation of the expression of PROM1. May also regulate amyloid beta-peptide secretion through acetylation of BACE1 and the regulation of its expression in neurons. N(6)-lysine acetylation in the ER maintains protein homeostasis and regulates reticulophagy. Alternatively, acetylates the free alpha-amino group of cysteine S-conjugates to form mercapturic acids. This is the final step in a major route for detoxification of a wide variety of reactive electrophiles which starts with their incorporation into glutathione S-conjugates. The glutathione S-conjugates are then further processed into cysteine S-conjugates and finally mercapturic acids which are water soluble and can be readily excreted in urine or bile. The sequence is that of N-acetyltransferase 8 from Homo sapiens (Human).